Here is a 552-residue protein sequence, read N- to C-terminus: ATP synthase subunit alpha, mitochondrial (552 aa).

A mitochondrion-targeting transit peptide spans 1–47 (MSIFSARLASSVARNLPKAANQVACKAAYPAASLAARKLHVASTQRS). Residue 211-218 (GDRQTGKT) coordinates ATP.

The protein belongs to the ATPase alpha/beta chains family. F-type ATPases have 2 components, CF(1) - the catalytic core - and CF(0) - the membrane proton channel. CF(1) has five subunits: alpha(3), beta(3), gamma(1), delta(1), epsilon(1). CF(0) has three main subunits: a, b and c.

Its subcellular location is the mitochondrion inner membrane. Functionally, mitochondrial membrane ATP synthase (F(1)F(0) ATP synthase or Complex V) produces ATP from ADP in the presence of a proton gradient across the membrane which is generated by electron transport complexes of the respiratory chain. F-type ATPases consist of two structural domains, F(1) - containing the extramembraneous catalytic core, and F(0) - containing the membrane proton channel, linked together by a central stalk and a peripheral stalk. During catalysis, ATP synthesis in the catalytic domain of F(1) is coupled via a rotary mechanism of the central stalk subunits to proton translocation. Subunits alpha and beta form the catalytic core in F(1). Rotation of the central stalk against the surrounding alpha(3)beta(3) subunits leads to hydrolysis of ATP in three separate catalytic sites on the beta subunits. Subunit alpha does not bear the catalytic high-affinity ATP-binding sites. The polypeptide is ATP synthase subunit alpha, mitochondrial (blw) (Drosophila melanogaster (Fruit fly)).